Here is a 254-residue protein sequence, read N- to C-terminus: NAD-dependent protein deacylase (254 aa).

A Deacetylase sirtuin-type domain is found at 1 to 250; it reads MERLEEARKR…LPPSPEDQAE (250 aa). Position 22 to 41 (22 to 41) interacts with NAD(+); that stretch reads GAGISKPSGIPTFRDAEGLW. 2 residues coordinate substrate: Tyr-66 and Arg-69. Position 104 to 107 (104 to 107) interacts with NAD(+); that stretch reads QNVD. The Proton acceptor role is filled by His-122. 4 residues coordinate Zn(2+): Cys-130, Cys-133, Cys-149, and Cys-152. Residues 189–191, 215–217, and Ala-233 each bind NAD(+); these read GTS and NPE.

The protein belongs to the sirtuin family. Class III subfamily. Zn(2+) is required as a cofactor.

It is found in the cytoplasm. The enzyme catalyses N(6)-acetyl-L-lysyl-[protein] + NAD(+) + H2O = 2''-O-acetyl-ADP-D-ribose + nicotinamide + L-lysyl-[protein]. The catalysed reaction is N(6)-succinyl-L-lysyl-[protein] + NAD(+) + H2O = 2''-O-succinyl-ADP-D-ribose + nicotinamide + L-lysyl-[protein]. Functionally, NAD-dependent lysine deacetylase and desuccinylase that specifically removes acetyl and succinyl groups on target proteins. Modulates the activities of several proteins which are inactive in their acylated form. This chain is NAD-dependent protein deacylase, found in Thermus thermophilus (strain ATCC 27634 / DSM 579 / HB8).